Reading from the N-terminus, the 544-residue chain is MAKDIKFSEEARRSMLRGVDTLANAVKVTLGPKGRNVVLEKKFGSPLITNDGVTIAKEIELEDAFENMGAKLVAEVASKTNDVAGDGTTTATVLAQAMIREGLKNVTAGANPMGLRKGIEKAVTAAIEELKTISKPIEGKSSIAQVAAISAADEEVGQLIAEAMERVGNDGVITLEESKGFTTELDVVEGMQFDRGYASPYMITDSDKMEAVLDNPYILITDKKISNIQEILPVLEQVVQQGKPLLIIAEDVEGEALATLVVNKLRGTFNVVAVKAPGFGDRRKAMLEDIAILTGGEVITEELGRDLKSATVESLGRAGKVVVTKENTTVVEGIGNTEQIAARIGQIRAQLEETTSEFDREKLQERLAKLAGGVAVIKVGAATETELKERKLRIEDALNSTRAAVEEGIVAGGGTSLMNVYTKVASIVAEGDEATGINIVLRALEEPVRQIAINAGLEGSVVVERLKGEKVGVGFNAATGEWVNMLESGIVDPAKVTRSALQNAASVAAMFLTTEAVVADKPEPNAPAMPDMGGMGMGGMGGMM.

ATP contacts are provided by residues 29–32 (TLGP), 86–90 (DGTTT), glycine 413, 476–478 (NAA), and aspartate 492.

The protein belongs to the chaperonin (HSP60) family. Forms a cylinder of 14 subunits composed of two heptameric rings stacked back-to-back. Interacts with the co-chaperonin GroES.

The protein localises to the cytoplasm. It catalyses the reaction ATP + H2O + a folded polypeptide = ADP + phosphate + an unfolded polypeptide.. In terms of biological role, together with its co-chaperonin GroES, plays an essential role in assisting protein folding. The GroEL-GroES system forms a nano-cage that allows encapsulation of the non-native substrate proteins and provides a physical environment optimized to promote and accelerate protein folding. This Bacillus cereus (strain G9842) protein is Chaperonin GroEL.